We begin with the raw amino-acid sequence, 278 residues long: Octanoyltransferase LipM (278 aa).

The region spanning 33-248 (KKMPPTIRFY…GFEKGLDVEL (216 aa)) is the BPL/LPL catalytic domain. The active-site Acyl-thioester intermediate is Cys-150.

Belongs to the octanoyltransferase LipM family. As to quaternary structure, monomer.

The catalysed reaction is octanoyl-[ACP] + L-lysyl-[protein] = N(6)-octanoyl-L-lysyl-[protein] + holo-[ACP] + H(+). The protein operates within protein modification; protein lipoylation via endogenous pathway; protein N(6)-(lipoyl)lysine from octanoyl-[acyl-carrier-protein]. Functionally, catalyzes the transfer of endogenously produced octanoic acid from octanoyl-acyl-carrier-protein onto the lipoyl domain of GcvH, an intermediate carrier during protein lipoylation. In Bacillus cereus (strain ATCC 14579 / DSM 31 / CCUG 7414 / JCM 2152 / NBRC 15305 / NCIMB 9373 / NCTC 2599 / NRRL B-3711), this protein is Octanoyltransferase LipM.